A 386-amino-acid polypeptide reads, in one-letter code: Demethylsterigmatocystin 6-O-methyltransferase (386 aa).

A substrate-binding site is contributed by 137–150 (FDISGPCTQILPDF). The interval 177–197 (MFEWMPQHPKHMESLGHLMAL) is substrate binding. Residues 228-229 (GG), Asp-253, 273-274 (NF), and Arg-289 contribute to the S-adenosyl-L-methionine site. Residue His-293 is the Proton acceptor of the active site.

This sequence belongs to the class I-like SAM-binding methyltransferase superfamily. Cation-independent O-methyltransferase family. COMT subfamily.

It catalyses the reaction 6-demethylsterigmatocystin + S-adenosyl-L-methionine = sterigmatocystin + S-adenosyl-L-homocysteine + H(+). It participates in mycotoxin biosynthesis; aflatoxin biosynthesis. Demethylsterigmatocystin 6-O-methyltransferase; part of the gene cluster that mediates the biosynthesis of aflatoxins, a group of polyketide-derived furanocoumarins, and part of the most toxic and carcinogenic compounds among the known mycotoxins. The four major aflatoxins produced by A.parasiticus are aflatoxin B1 (AFB1), aflatoxin B2 (AFB2), aflatoxin G1 (AFG1) and aflatoxin G2 (AFG2). Within the aflatoxin pathway, the methyltransferase aflO then catalyzes the modification of demethylsterigmatocystin (DMST) to sterigmatocystin (ST), and of dihydrodemethylsterigmatocystin (DMDHST) to dihydrosterigmatocystin (DHST). The biosynthesis of aflatoxins begins with the norsolorinic acid synthase aflC that combines a hexanoyl starter unit produced by the fatty acid synthase aflA/aflB and 7 malonyl-CoA extender units to synthesize the precursor NOR. The second step is the conversion of NOR to averantin and requires the norsolorinic acid ketoreductase aflD, which catalyzes the dehydration of norsolorinic acid to form (1'S)-averantin. The norsolorinic acid reductases aflE and aflF may also play a role in the conversion of NOR to AVN. The cytochrome P450 monooxygenase aflG then catalyzes the hydroxylation of AVN to 5'hydroxyaverantin (HAVN). The next step is performed by the 5'-hydroxyaverantin dehydrogenase aflH that transforms HAVN to 5'-oxoaverantin (OAVN) which is further converted to averufin (AVF) by aflK that plays a dual role in the pathway, as a 5'-oxoaverantin cyclase that mediates conversion of 5'-oxoaverantin, as well as a versicolorin B synthase in a later step in the pathway. The averufin oxidase aflI catalyzes the conversion of AVF to versiconal hemiacetal acetate (VHA). VHA is then the substrate for the versiconal hemiacetal acetate esterase aflJ to yield versiconal (VAL). Versicolorin B synthase aflK then converts VAL to versicolorin B (VERB) by closing the bisfuran ring of aflatoxin which is required for DNA-binding, thus giving to aflatoxin its activity as a mutagen. Then, the activity of the versicolorin B desaturase aflL leads to versicolorin A (VERA). A branch point starts from VERB since it can also be converted to dihydrodemethylsterigmatocystin (DMDHST), probably also by aflL, VERA being a precursor for aflatoxins B1 and G1, and DMDHST for aflatoxins B2 and G2. Next, the versicolorin reductase aflM and the cytochrome P450 monooxygenase aflN are involved in conversion of VERA to demethylsterigmatocystin (DMST). AflX and aflY seem also involved in this step, through probable aflX-mediated epoxide ring-opening step following versicolorin A oxidation and aflY-mediated Baeyer-Villiger oxidation required for the formation of the xanthone ring. The methyltransferase aflO then leads to the modification of DMST to sterigmatocystin (ST), and of DMDHST to dihydrosterigmatocystin (DHST). Both ST and DHST are then substrates of the O-methyltransferase aflP to yield O-methylsterigmatocystin (OMST) and dihydro-O-methylsterigmatocystin (DHOMST), respectively. Finally OMST is converted to aflatoxins B1 and G1, and DHOMST to aflatoxins B2 and G2, via the action of several enzymes including O-methylsterigmatocystin oxidoreductase aflQ, the cytochrome P450 monooxygenase aflU, but also the NADH-dependent flavin oxidoreductase nadA which is specifically required for the synthesis of AFG1. The chain is Demethylsterigmatocystin 6-O-methyltransferase from Aspergillus parasiticus (strain ATCC 56775 / NRRL 5862 / SRRC 143 / SU-1).